The primary structure comprises 416 residues: Gamma-glutamyl phosphate reductase (416 aa).

This sequence belongs to the gamma-glutamyl phosphate reductase family.

The protein resides in the cytoplasm. It carries out the reaction L-glutamate 5-semialdehyde + phosphate + NADP(+) = L-glutamyl 5-phosphate + NADPH + H(+). Its pathway is amino-acid biosynthesis; L-proline biosynthesis; L-glutamate 5-semialdehyde from L-glutamate: step 2/2. Its function is as follows. Catalyzes the NADPH-dependent reduction of L-glutamate 5-phosphate into L-glutamate 5-semialdehyde and phosphate. The product spontaneously undergoes cyclization to form 1-pyrroline-5-carboxylate. The polypeptide is Gamma-glutamyl phosphate reductase (Salmonella schwarzengrund (strain CVM19633)).